A 155-amino-acid polypeptide reads, in one-letter code: MAKGEGNVLAQHKKARHDYHIVETIEAGIVLTGTEIKSVRAARIQLKDGFAQIKNGEAWLVNVHIAPFEQGNIWNADPERTRKLLLKKREIQHLADELKGTGMTLVPLKVYLKDGFAKVLIGLAKGKHDYDKRESIKRREQDRDIRRVMKSVNRR.

This sequence belongs to the SmpB family.

It localises to the cytoplasm. In terms of biological role, required for rescue of stalled ribosomes mediated by trans-translation. Binds to transfer-messenger RNA (tmRNA), required for stable association of tmRNA with ribosomes. tmRNA and SmpB together mimic tRNA shape, replacing the anticodon stem-loop with SmpB. tmRNA is encoded by the ssrA gene; the 2 termini fold to resemble tRNA(Ala) and it encodes a 'tag peptide', a short internal open reading frame. During trans-translation Ala-aminoacylated tmRNA acts like a tRNA, entering the A-site of stalled ribosomes, displacing the stalled mRNA. The ribosome then switches to translate the ORF on the tmRNA; the nascent peptide is terminated with the 'tag peptide' encoded by the tmRNA and targeted for degradation. The ribosome is freed to recommence translation, which seems to be the essential function of trans-translation. The sequence is that of SsrA-binding protein from Streptococcus equi subsp. zooepidemicus (strain MGCS10565).